A 229-amino-acid polypeptide reads, in one-letter code: Potassium/proton antiporter CemA (229 aa).

3 helical membrane passes run 7 to 27, 106 to 126, and 189 to 209; these read LTPF…SLSF, IVLH…YYFL, and IISG…KYWI.

Belongs to the CemA family.

It localises to the plastid. The protein resides in the chloroplast inner membrane. It catalyses the reaction K(+)(in) + H(+)(out) = K(+)(out) + H(+)(in). In terms of biological role, contributes to K(+)/H(+) antiport activity by supporting proton efflux to control proton extrusion and homeostasis in chloroplasts in a light-dependent manner to modulate photosynthesis. Prevents excessive induction of non-photochemical quenching (NPQ) under continuous-light conditions. Indirectly promotes efficient inorganic carbon uptake into chloroplasts. The sequence is that of Potassium/proton antiporter CemA from Calycanthus floridus var. glaucus (Eastern sweetshrub).